Here is a 549-residue protein sequence, read N- to C-terminus: Glucose-6-phosphate isomerase (549 aa).

Glutamate 355 serves as the catalytic Proton donor. Active-site residues include histidine 387 and lysine 515.

The protein belongs to the GPI family.

Its subcellular location is the cytoplasm. It catalyses the reaction alpha-D-glucose 6-phosphate = beta-D-fructose 6-phosphate. It participates in carbohydrate biosynthesis; gluconeogenesis. It functions in the pathway carbohydrate degradation; glycolysis; D-glyceraldehyde 3-phosphate and glycerone phosphate from D-glucose: step 2/4. Its function is as follows. Catalyzes the reversible isomerization of glucose-6-phosphate to fructose-6-phosphate. In Haemophilus influenzae (strain PittGG), this protein is Glucose-6-phosphate isomerase.